The primary structure comprises 223 residues: Ras-related protein Rab-21 (223 aa).

The residue at position 2 (Ala-2) is an N-acetylalanine. Residues Gly-26, Gly-29, Lys-30, Thr-31, Ser-32, Asn-43, Asp-44, His-46, Thr-48, and Thr-49 each coordinate GTP. Thr-31 contributes to the Mg(2+) binding site. A Switch 1 motif is present at residues 41 to 54 (KFNDKHITTLQASF). Mg(2+) is bound by residues Thr-49 and Asp-72. The Switch 2 signature appears at 74–92 (AGQERFHALGPIYYRDSNG). Residues Gly-75, Asn-130, Lys-131, Asp-133, Ala-161, and Lys-162 each coordinate GTP. 2 S-geranylgeranyl cysteine lipidation sites follow: Cys-219 and Cys-220. A Cysteine methyl ester modification is found at Cys-220. A propeptide spans 221–223 (SSG) (removed in mature form).

The protein belongs to the small GTPase superfamily. Rab family. As to quaternary structure, interacts with the cytoplasmic tail of integrins ITGA1, ITGA2, ITGA5, ITGA6, ITGA11 and ITGB1; this interaction is dependent upon its GDP/GTP cycle. Interacts with RABGEF1 (via VPS9 domain). Interacts with ANKRD27. Interacts (in GTP-bound form) with VAMP8 in response to starvation; the interaction probably regulates VAMP8 endolysosomal trafficking. Interacts (active GTP-bound form) with TMED10; the interaction is indirect and regulates TMED10 abundance and localization at the Golgi. It depends on Mg(2+) as a cofactor.

The protein resides in the endoplasmic reticulum membrane. Its subcellular location is the golgi apparatus. It localises to the trans-Golgi network. It is found in the golgi apparatus membrane. The protein localises to the early endosome membrane. The protein resides in the cytoplasmic vesicle membrane. Its subcellular location is the cleavage furrow. It localises to the cell projection. It is found in the neuron projection. It carries out the reaction GTP + H2O = GDP + phosphate + H(+). Regulated by guanine nucleotide exchange factors (GEFs) including ANKRD27 and RABGEF1, which promote the exchange of bound GDP for free GTP. Regulated by GTPase activating proteins (GAPs) which increase the GTP hydrolysis activity. Inhibited by GDP dissociation inhibitors (GDIs). The small GTPases Rab are key regulators of intracellular membrane trafficking, from the formation of transport vesicles to their fusion with membranes. Rabs cycle between an inactive GDP-bound form and an active GTP-bound form that is able to recruit to membranes different sets of downstream effectors directly responsible for vesicle formation, movement, tethering and fusion. RAB21 is involved in membrane trafficking control. Regulates integrin internalization and recycling, but does not influence the traffic of endosomally translocated receptors in general. As a result, may regulate cell adhesion and migration. During the mitosis of adherent cells, controls the endosomal trafficking of integrins which is required for the successful completion of cytokinesis. Involved in neurite growth. Following SBF2/MTMT13-mediated activation in response to starvation-induced autophagy, binds to and regulates SNARE protein VAMP8 endolysosomal transport required for SNARE-mediated autophagosome-lysosome fusion. Modulates protein levels of the cargo receptors TMED2 and TMED10, and required for appropriate Golgi localization of TMED10. The polypeptide is Ras-related protein Rab-21 (Rattus norvegicus (Rat)).